We begin with the raw amino-acid sequence, 352 residues long: Probable gamma-glutamyl hydrolase 3 (352 aa).

A signal peptide spans 1–19; that stretch reads MWRFCFFLSLLFFDVSAVK. Residues 49–352 form the Gamma-glutamyl hydrolase domain; the sequence is AADPNLNYKP…SGDDEVYIFT (304 aa). C166 acts as the Nucleophile in catalysis. H279 is an active-site residue.

This sequence belongs to the peptidase C26 family.

It localises to the vacuole. It is found in the secreted. Its subcellular location is the extracellular space. The protein localises to the cell wall. It carries out the reaction (6S)-5,6,7,8-tetrahydrofolyl-(gamma-L-Glu)(n) + (n-1) H2O = (6S)-5,6,7,8-tetrahydrofolate + (n-1) L-glutamate. Cleaves the polyglutamate sidechains of folate polyglutamates in the vacuole. Is important for polyglutamyl tail length determination before vacuolar exit. Plays a role on folate stability and intracellular folate content. In Arabidopsis thaliana (Mouse-ear cress), this protein is Probable gamma-glutamyl hydrolase 3 (GGH3).